The following is a 309-amino-acid chain: Dihydroorotate dehydrogenase B (NAD(+)), catalytic subunit (309 aa).

FMN is bound by residues Ser21 and 45–46 (KA). Substrate contacts are provided by residues Lys45 and 69-73 (NAIGL). Residues Asn99 and Asn127 each coordinate FMN. Substrate is bound at residue Asn127. Cys130 functions as the Nucleophile in the catalytic mechanism. Positions 165 and 191 each coordinate FMN. 192–193 (NT) contacts substrate. Residues Gly217, 243–244 (GG), and 265–266 (GT) each bind FMN.

Belongs to the dihydroorotate dehydrogenase family. Type 1 subfamily. In terms of assembly, heterotetramer of 2 PyrK and 2 PyrD type B subunits. The cofactor is FMN.

The protein localises to the cytoplasm. It carries out the reaction (S)-dihydroorotate + NAD(+) = orotate + NADH + H(+). Its pathway is pyrimidine metabolism; UMP biosynthesis via de novo pathway; orotate from (S)-dihydroorotate (NAD(+) route): step 1/1. Its function is as follows. Catalyzes the conversion of dihydroorotate to orotate with NAD(+) as electron acceptor. The protein is Dihydroorotate dehydrogenase B (NAD(+)), catalytic subunit (pyrD) of Exiguobacterium sibiricum (strain DSM 17290 / CCUG 55495 / CIP 109462 / JCM 13490 / 255-15).